The primary structure comprises 170 residues: Protein FAM209 (170 aa).

The N-terminal stretch at 1–20 (MRTLLRWCLFLSLCVSCACA) is a signal peptide. A helical transmembrane segment spans residues 56-76 (WLGNKWLWLFVAIMIYVMLKF). The disordered stretch occupies residues 83 to 107 (KEQHPPGLRGCQLRSPPKKAQNISP).

Interacts with DPY19L2. Interacts with CYLC1; the interaction may be relevant for proper acrosome attachment to the nuclear envelope. Predominately expressed in testis.

The protein localises to the nucleus inner membrane. Its function is as follows. Required for sperm acrosome biogenesis. The sequence is that of Protein FAM209 from Mus musculus (Mouse).